A 303-amino-acid chain; its full sequence is Hemolysin E (303 aa).

Cysteine 87 and cysteine 285 are oxidised to a cystine. Residues 183-203 (AGVVAGPFGLIISYSIAAGVV) traverse the membrane as a helical segment.

Belongs to the hemolysin E family. In terms of assembly, monomer and oligomer. In periplasm, it is present as a monomer, while in outer membrane vesicles, it oligomerizes to form a pore structure that is active. The pore is formed by a dodecamer. In periplasm, it forms a disulfide bond, which prevents the oligomerization. In outer membrane vesicles, the redox status prevents formation of the disulfide bond, leading to oligomerization and pore formation.

It is found in the secreted. The protein resides in the periplasm. It localises to the host cell membrane. Its function is as follows. Toxin, which has some hemolytic activity towards mammalian cells. Acts by forming a pore-like structure upon contact with mammalian cells. The polypeptide is Hemolysin E (hlyE) (Escherichia coli O157:H7).